The sequence spans 210 residues: Large ribosomal subunit protein uL4 (210 aa).

It belongs to the universal ribosomal protein uL4 family. In terms of assembly, part of the 50S ribosomal subunit.

Functionally, one of the primary rRNA binding proteins, this protein initially binds near the 5'-end of the 23S rRNA. It is important during the early stages of 50S assembly. It makes multiple contacts with different domains of the 23S rRNA in the assembled 50S subunit and ribosome. Forms part of the polypeptide exit tunnel. The sequence is that of Large ribosomal subunit protein uL4 (rplD) from Thermus thermophilus.